Here is a 479-residue protein sequence, read N- to C-terminus: MLPESLVEYVREVGSGGTTCEEFTAGAIERTKKQGLDAYITLNEKALDEARRIDSRIKKGEKVGRCLGAPIAVKDNICVRGMRTTCASKMLEGYESPYDATVVTRLLAEDAIITGKTNMDEFAMGLTTEFSAYGPSRNPWNKECTPGGSSGGSAAAVGGLECIASLGSDTGGSVRNPASFCGMVGFKPTYGLVSRYGLVSYANSIEQIGPITRTVEDAAFMMDVISGADPNDATTIECKGGFLDGIDAGIKGKKVGLITEMAGEGIDPRVAEATRDAMAALEDAGARCGKVSLDMVKYSVAAYYTITATEAASNLARYDNTMYGYDMPIESYEFHSYISKARRKFGPEVTRRMILGGFVSSSGHGGRYYHRALKVRGLLAREAEEALAEYDLLLSPTVPILPFKLGEKMGDPVGLFLVDYNTVTANLTGKPAASVPYTVCDGLPVGMQLMGRPSGDAEVLQAAYSLQERSRMPEAPPWQ.

Residues K74 and S149 each act as charge relay system in the active site. The Acyl-ester intermediate role is filled by S173.

It belongs to the amidase family. GatA subfamily. As to quaternary structure, heterotrimer of A, B and C subunits.

The enzyme catalyses L-glutamyl-tRNA(Gln) + L-glutamine + ATP + H2O = L-glutaminyl-tRNA(Gln) + L-glutamate + ADP + phosphate + H(+). Functionally, allows the formation of correctly charged Gln-tRNA(Gln) through the transamidation of misacylated Glu-tRNA(Gln) in organisms which lack glutaminyl-tRNA synthetase. The reaction takes place in the presence of glutamine and ATP through an activated gamma-phospho-Glu-tRNA(Gln). The protein is Glutamyl-tRNA(Gln) amidotransferase subunit A of Cenarchaeum symbiosum (strain A).